The primary structure comprises 951 residues: Protein translocase subunit SecA 1 (951 aa).

ATP contacts are provided by residues Gln87, 105–109, and Asp525; that span reads GEGKT. The segment at 911–942 is disordered; it reads PVVSADRSSRDPGNPASWGKVGRNEDCPCGSG. The Zn(2+) site is built by Cys937, Cys939, Cys948, and His949.

This sequence belongs to the SecA family. As to quaternary structure, monomer and homodimer. Part of the essential Sec protein translocation apparatus which comprises SecA, SecYEG and auxiliary proteins SecDF-YajC and YidC. The cofactor is Zn(2+).

It localises to the cell inner membrane. The protein resides in the cytoplasm. The enzyme catalyses ATP + H2O + cellular proteinSide 1 = ADP + phosphate + cellular proteinSide 2.. Part of the Sec protein translocase complex. Interacts with the SecYEG preprotein conducting channel. Has a central role in coupling the hydrolysis of ATP to the transfer of proteins into and across the cell membrane, serving both as a receptor for the preprotein-SecB complex and as an ATP-driven molecular motor driving the stepwise translocation of polypeptide chains across the membrane. In Nitrobacter hamburgensis (strain DSM 10229 / NCIMB 13809 / X14), this protein is Protein translocase subunit SecA 1.